Here is a 403-residue protein sequence, read N- to C-terminus: G2/mitotic-specific cyclin-B3 (403 aa).

Disordered regions lie at residues 1–86 and 102–122; these read MPVA…APPA and RKTP…PEEP. Over residues 7-25 the composition is skewed to polar residues; that stretch reads SKAQSSKQPRASKAPSVTE. A D-box motif is present at residues 51–59; that stretch reads RSAFGDITN.

The protein belongs to the cyclin family. Cyclin AB subfamily. Interacts with the CDK1 and CDK2 protein kinases. Post-translationally, ubiquitinated, leading to its degradation.

It localises to the nucleus. Functionally, cyclins are positive regulatory subunits of the cyclin-dependent kinases (CDKs), and thereby play an essential role in the control of the cell cycle, notably via their destruction during cell division. Could be involved at the G2/M (mitosis or meiosis) transition. G2/M cyclins accumulate steadily during G2 and are abruptly destroyed at mitosis. The polypeptide is G2/mitotic-specific cyclin-B3 (CCNB3) (Gallus gallus (Chicken)).